The primary structure comprises 290 residues: Homeobox protein EMX1 (290 aa).

A DNA-binding region (homeobox) is located at residues 192 to 251; that stretch reads PKRIRTAFSPSQLLRLERAFEKNHYVVGAERKQLAGSLSLSETQVKVWFQNRRTKYKRQK. The interval 249–290 is disordered; sequence RQKLEEEGPESEQKKKGSHHINRWRIATKQANGEDIDVTSND. A compositionally biased stretch (basic and acidic residues) spans 250–263; it reads QKLEEEGPESEQKK.

It belongs to the EMX homeobox family. In terms of assembly, interacts with WRD11 (via the N-terminal and the central portion of the protein); the interaction associates EMX1 with GLI3. In terms of tissue distribution, cerebral cortex.

The protein resides in the nucleus. Its subcellular location is the cytoplasm. Its function is as follows. Transcription factor, which in cooperation with EMX2, acts to generate the boundary between the roof and archipallium in the developing brain. May function in combinations with OTX1/2 to specify cell fates in the developing central nervous system. The polypeptide is Homeobox protein EMX1 (Homo sapiens (Human)).